The following is a 28-amino-acid chain: Ranatuerin-2LTa (28 aa).

The cysteines at positions 23 and 28 are disulfide-linked.

In terms of tissue distribution, expressed by the skin glands.

The protein localises to the secreted. Its function is as follows. Has antibacterial activity. This Rana latastei (Italian agile frog) protein is Ranatuerin-2LTa.